Here is a 471-residue protein sequence, read N- to C-terminus: Sulfate adenylyltransferase subunit 1 (471 aa).

The region spanning 22–237 (KELLRFLTCG…LESVQITGAK (216 aa)) is the tr-type G domain. The segment at 31–38 (GSVDDGKS) is G1. Position 31 to 38 (31 to 38 (GSVDDGKS)) interacts with GTP. The segment at 89–93 (GITID) is G2. The interval 110–113 (DTPG) is G3. GTP is bound by residues 110–114 (DTPGH) and 165–168 (NKMD). The segment at 165–168 (NKMD) is G4. The G5 stretch occupies residues 202-204 (SAL).

Belongs to the TRAFAC class translation factor GTPase superfamily. Classic translation factor GTPase family. CysN/NodQ subfamily. Heterodimer composed of CysD, the smaller subunit, and CysN.

It catalyses the reaction sulfate + ATP + H(+) = adenosine 5'-phosphosulfate + diphosphate. The protein operates within sulfur metabolism; hydrogen sulfide biosynthesis; sulfite from sulfate: step 1/3. In terms of biological role, with CysD forms the ATP sulfurylase (ATPS) that catalyzes the adenylation of sulfate producing adenosine 5'-phosphosulfate (APS) and diphosphate, the first enzymatic step in sulfur assimilation pathway. APS synthesis involves the formation of a high-energy phosphoric-sulfuric acid anhydride bond driven by GTP hydrolysis by CysN coupled to ATP hydrolysis by CysD. The polypeptide is Sulfate adenylyltransferase subunit 1 (Saccharophagus degradans (strain 2-40 / ATCC 43961 / DSM 17024)).